The sequence spans 143 residues: Cytochrome c-type biogenesis protein CcmE (143 aa).

At 1–8 (MNPVRRRK) the chain is on the cytoplasmic side. A helical; Signal-anchor for type II membrane protein transmembrane segment spans residues 9 to 29 (LFILLFALTILSAAAALVLYA). The Periplasmic portion of the chain corresponds to 30 to 143 (LRQNISLFYT…KSALADKVKQ (114 aa)). Residues histidine 124 and tyrosine 128 each contribute to the heme site.

It belongs to the CcmE/CycJ family.

It localises to the cell inner membrane. Functionally, heme chaperone required for the biogenesis of c-type cytochromes. Transiently binds heme delivered by CcmC and transfers the heme to apo-cytochromes in a process facilitated by CcmF and CcmH. The chain is Cytochrome c-type biogenesis protein CcmE from Legionella pneumophila (strain Corby).